The following is a 278-amino-acid chain: Pantothenate synthetase (278 aa).

28–35 (MGNLHAGH) provides a ligand contact to ATP. Residue H35 is the Proton donor of the active site. Q59 contributes to the (R)-pantoate binding site. Q59 contributes to the beta-alanine binding site. 145-148 (GKKD) contributes to the ATP binding site. A (R)-pantoate-binding site is contributed by Q151. 182–185 (LSSR) is an ATP binding site.

It belongs to the pantothenate synthetase family. As to quaternary structure, homodimer.

The protein resides in the cytoplasm. The catalysed reaction is (R)-pantoate + beta-alanine + ATP = (R)-pantothenate + AMP + diphosphate + H(+). Its pathway is cofactor biosynthesis; (R)-pantothenate biosynthesis; (R)-pantothenate from (R)-pantoate and beta-alanine: step 1/1. Catalyzes the condensation of pantoate with beta-alanine in an ATP-dependent reaction via a pantoyl-adenylate intermediate. The chain is Pantothenate synthetase from Methylobacillus flagellatus (strain ATCC 51484 / DSM 6875 / VKM B-1610 / KT).